The following is a 150-amino-acid chain: Arginine repressor (150 aa).

The protein belongs to the ArgR family.

It is found in the cytoplasm. Its pathway is amino-acid biosynthesis; L-arginine biosynthesis [regulation]. Its function is as follows. Regulates arginine biosynthesis genes. The sequence is that of Arginine repressor from Staphylococcus epidermidis (strain ATCC 35984 / DSM 28319 / BCRC 17069 / CCUG 31568 / BM 3577 / RP62A).